Consider the following 276-residue polypeptide: Diaminopimelate epimerase (276 aa).

The substrate site is built by Asn13, Gln46, and Asn66. The Proton donor role is filled by Cys75. Substrate is bound by residues 76-77 (GN), Asn159, Asn192, and 210-211 (ER). The Proton acceptor role is filled by Cys219. Position 220–221 (220–221 (GT)) interacts with substrate.

It belongs to the diaminopimelate epimerase family. Homodimer.

Its subcellular location is the cytoplasm. The enzyme catalyses (2S,6S)-2,6-diaminopimelate = meso-2,6-diaminopimelate. It functions in the pathway amino-acid biosynthesis; L-lysine biosynthesis via DAP pathway; DL-2,6-diaminopimelate from LL-2,6-diaminopimelate: step 1/1. In terms of biological role, catalyzes the stereoinversion of LL-2,6-diaminopimelate (L,L-DAP) to meso-diaminopimelate (meso-DAP), a precursor of L-lysine and an essential component of the bacterial peptidoglycan. The chain is Diaminopimelate epimerase from Pseudomonas putida (strain GB-1).